Consider the following 342-residue polypeptide: Platelet-activating factor receptor (342 aa).

Topologically, residues 1–16 (MEPNNSFRVDSEFRYT) are extracellular. N-linked (GlcNAc...) asparagine glycosylation occurs at N4. Residues 17–38 (LFPIFYSIVFVLGVIANSYVLW) traverse the membrane as a helical segment. The Cytoplasmic portion of the chain corresponds to 39–54 (VFARLYPSKKFNEIKI). Residues 55–74 (FMVNLTMADLLFLVTLPLWI) traverse the membrane as a helical segment. Residues 75–91 (VYYYNQGDWILPKFLCN) lie on the Extracellular side of the membrane. A disulfide bridge links C90 with C173. A helical transmembrane segment spans residues 92-113 (LAGCFFFINTYCSVAFLAVITY). Topologically, residues 114–133 (NRFQAVTRPIKTAQATTRKR) are cytoplasmic. A helical transmembrane segment spans residues 134–155 (GFLLSLIIWVSIVGAASYFFVL). Residues 156-184 (DSTNSEPKKTGSGNITRCFEHYEKGSIPV) lie on the Extracellular side of the membrane. N169 carries N-linked (GlcNAc...) asparagine glycosylation. Residues 185-205 (LIIHIFLVFSFFLVFLIILFC) traverse the membrane as a helical segment. Residues 206 to 233 (NLVIIRTLLTQQVQMQRNAEVKRRALWM) are Cytoplasmic-facing. A helical transmembrane segment spans residues 234–254 (VCTVLAVFVICFVPHHLVQLP). The Extracellular portion of the chain corresponds to 255–276 (WTLAELGFQDTDFHQGINDAHQ). Residues 277-296 (VTLCLLSTNCVLDPIIYCFL) traverse the membrane as a helical segment. The Cytoplasmic portion of the chain corresponds to 297 to 342 (TKKFRKHLTEKLYSMRESRKCSRATSETGTEVVVQLKDAPIKSLKY).

It belongs to the G-protein coupled receptor 1 family. Interacts with ARRB1.

The protein resides in the cell membrane. Receptor for platelet activating factor, a chemotactic phospholipid mediator that possesses potent inflammatory, smooth-muscle contractile and hypotensive activity. Seems to mediate its action via a G protein that activates a phosphatidylinositol-calcium second messenger system. In Capra hircus (Goat), this protein is Platelet-activating factor receptor.